Here is an 82-residue protein sequence, read N- to C-terminus: Small ribosomal subunit protein eS21 (82 aa).

This sequence belongs to the eukaryotic ribosomal protein eS21 family.

The chain is Small ribosomal subunit protein eS21 (RPS21) from Cyanophora paradoxa.